A 298-amino-acid chain; its full sequence is 4-diphosphocytidyl-2-C-methyl-D-erythritol kinase (298 aa).

Residue Lys19 is part of the active site. 106 to 116 (PVASGIGGGSA) provides a ligand contact to ATP. Residue Asp148 is part of the active site.

The protein belongs to the GHMP kinase family. IspE subfamily.

It catalyses the reaction 4-CDP-2-C-methyl-D-erythritol + ATP = 4-CDP-2-C-methyl-D-erythritol 2-phosphate + ADP + H(+). Its pathway is isoprenoid biosynthesis; isopentenyl diphosphate biosynthesis via DXP pathway; isopentenyl diphosphate from 1-deoxy-D-xylulose 5-phosphate: step 3/6. Catalyzes the phosphorylation of the position 2 hydroxy group of 4-diphosphocytidyl-2C-methyl-D-erythritol. This Rhizobium leguminosarum bv. trifolii (strain WSM2304) protein is 4-diphosphocytidyl-2-C-methyl-D-erythritol kinase.